We begin with the raw amino-acid sequence, 358 residues long: Phosphate acyltransferase (358 aa).

A disordered region spans residues 336-358; the sequence is SAAGAAPASPETAPTPHPSTRAA.

Belongs to the PlsX family. Homodimer. Probably interacts with PlsY.

It is found in the cytoplasm. The catalysed reaction is a fatty acyl-[ACP] + phosphate = an acyl phosphate + holo-[ACP]. It functions in the pathway lipid metabolism; phospholipid metabolism. Its function is as follows. Catalyzes the reversible formation of acyl-phosphate (acyl-PO(4)) from acyl-[acyl-carrier-protein] (acyl-ACP). This enzyme utilizes acyl-ACP as fatty acyl donor, but not acyl-CoA. This Cupriavidus pinatubonensis (strain JMP 134 / LMG 1197) (Cupriavidus necator (strain JMP 134)) protein is Phosphate acyltransferase.